The sequence spans 244 residues: Probable H/ACA ribonucleoprotein complex subunit 1-like protein (244 aa).

Disordered regions lie at residues M1 to D53 and F145 to E244. 2 RGG-box regions span residues R4 to G51 and R153 to G222. Basic and acidic residues predominate over residues R160–G173. Gly residues-rich tracts occupy residues R174–R201 and F208–G217. A compositionally biased stretch (basic and acidic residues) spans G218 to Y228.

This sequence belongs to the GAR1 family. Component of the small nucleolar ribonucleoprotein particle containing H/ACA-type snoRNAs (H/ACA snoRNPs).

The protein resides in the nucleus. The protein localises to the nucleolus. In terms of biological role, required for ribosome biogenesis. Part of a complex which catalyzes pseudouridylation of rRNA. This involves the isomerization of uridine such that the ribose is subsequently attached to C5, instead of the normal N1. Pseudouridine ('psi') residues may serve to stabilize the conformation of rRNAs. Involved in phase separation into sub-nucleolar condensates. Essential for normal development and also plays a role in fertility. This is Probable H/ACA ribonucleoprotein complex subunit 1-like protein from Caenorhabditis elegans.